Consider the following 167-residue polypeptide: MAHIEKQAGELQEKLIAVNRVSKTVKGGRIFSFTALTVVGDGNGRVGFGYGKAREVPAAIQKAMEKARRNMINVALNNGTLQHPVKGAHTGSRVFMQPASEGTGIIAGGAMRAVLEVAGVHNVLAKAYGSTNPINVVRATIDGLENMNSPEMVAAKRGKSVEEILGK.

The 64-residue stretch at leucine 11 to valine 74 folds into the S5 DRBM domain.

The protein belongs to the universal ribosomal protein uS5 family. As to quaternary structure, part of the 30S ribosomal subunit. Contacts proteins S4 and S8.

Functionally, with S4 and S12 plays an important role in translational accuracy. Located at the back of the 30S subunit body where it stabilizes the conformation of the head with respect to the body. In Shigella dysenteriae serotype 1 (strain Sd197), this protein is Small ribosomal subunit protein uS5.